The following is a 188-amino-acid chain: Cell division protein SepF (188 aa).

The protein belongs to the SepF family. In terms of assembly, homodimer. Interacts with FtsZ.

It is found in the cytoplasm. Its function is as follows. Cell division protein that is part of the divisome complex and is recruited early to the Z-ring. Probably stimulates Z-ring formation, perhaps through the cross-linking of FtsZ protofilaments. Its function overlaps with FtsA. The protein is Cell division protein SepF of Synechococcus sp. (strain CC9605).